A 429-amino-acid polypeptide reads, in one-letter code: 3-phosphoshikimate 1-carboxyvinyltransferase (429 aa).

Lysine 11, serine 12, and arginine 16 together coordinate 3-phosphoshikimate. A phosphoenolpyruvate-binding site is contributed by lysine 11. Residues glycine 82 and arginine 110 each contribute to the phosphoenolpyruvate site. 3-phosphoshikimate is bound by residues serine 155, glutamine 157, aspartate 302, and lysine 329. A phosphoenolpyruvate-binding site is contributed by glutamine 157. Aspartate 302 acts as the Proton acceptor in catalysis. Positions 333 and 385 each coordinate phosphoenolpyruvate.

The protein belongs to the EPSP synthase family. Monomer.

The protein resides in the cytoplasm. It carries out the reaction 3-phosphoshikimate + phosphoenolpyruvate = 5-O-(1-carboxyvinyl)-3-phosphoshikimate + phosphate. Its pathway is metabolic intermediate biosynthesis; chorismate biosynthesis; chorismate from D-erythrose 4-phosphate and phosphoenolpyruvate: step 6/7. Functionally, catalyzes the transfer of the enolpyruvyl moiety of phosphoenolpyruvate (PEP) to the 5-hydroxyl of shikimate-3-phosphate (S3P) to produce enolpyruvyl shikimate-3-phosphate and inorganic phosphate. This chain is 3-phosphoshikimate 1-carboxyvinyltransferase, found in Helicobacter pylori (strain Shi470).